Here is a 202-residue protein sequence, read N- to C-terminus: LexA repressor (202 aa).

A DNA-binding region (H-T-H motif) is located at residues 28-48 (RAEIAQRLGFRSPNAAEEHLK). Catalysis depends on for autocatalytic cleavage activity residues S119 and K156.

Belongs to the peptidase S24 family. As to quaternary structure, homodimer.

It carries out the reaction Hydrolysis of Ala-|-Gly bond in repressor LexA.. Functionally, represses a number of genes involved in the response to DNA damage (SOS response), including recA and lexA. Binds to the 16 bp palindromic sequence 5'-CTGTATATATATACAG-3'. In the presence of single-stranded DNA, RecA interacts with LexA causing an autocatalytic cleavage which disrupts the DNA-binding part of LexA, leading to derepression of the SOS regulon and eventually DNA repair. In Enterobacter sp. (strain 638), this protein is LexA repressor.